Here is a 467-residue protein sequence, read N- to C-terminus: Multiple inositol polyphosphate phosphatase 1 (467 aa).

The first 15 residues, 1–15, serve as a signal peptide directing secretion; that stretch reads MRLLILLLLPLVAIA. H67 is an active-site residue. N-linked (GlcNAc...) asparagine glycosylation is found at N120, N159, and N234. The GPI-anchor amidated glycine moiety is linked to residue G441. A propeptide spans 442 to 467 (removed in mature form); it reads GAPSLGSGVGGLLATTLAAMLVYLMH.

It belongs to the histidine acid phosphatase family. MINPP1 subfamily. In terms of processing, N-glycosylated.

Its subcellular location is the cell membrane. The protein resides in the apical cell membrane. It is found in the basolateral cell membrane. The protein localises to the cell projection. It localises to the filopodium. Its subcellular location is the cell junction. It carries out the reaction (2R)-2,3-bisphosphoglycerate + H2O = (2R)-2-phosphoglycerate + phosphate. The catalysed reaction is 1D-myo-inositol hexakisphosphate + H2O = 1D-myo-inositol 1,2,4,5,6-pentakisphosphate + phosphate. It catalyses the reaction 1D-myo-inositol 1,2,4,5,6-pentakisphosphate + H2O = 1D-myo-inositol 1,2,5,6-tetrakisphosphate + phosphate. The enzyme catalyses 1D-myo-inositol 1,2,5,6-tetrakisphosphate + H2O = 1D-myo-inositol 1,2,6-trisphosphate + phosphate. Functionally, probable multiple inositol polyphosphate phosphatase that hydrolyzes 1D-myo-inositol 1,3,4,5,6-pentakisphosphate (InsP5[2OH]) and 1D-myo-inositol hexakisphosphate (InsP6) to a range of less phosphorylated inositol phosphates. This regulates the availability of these various small molecule second messengers and metal chelators which control many aspects of cell physiology. May have a dual substrate specificity, and function as a 2,3-bisphosphoglycerate 3-phosphatase hydrolyzing 2,3-bisphosphoglycerate to 2-phosphoglycerate. 2,3-bisphosphoglycerate (BPG) is formed as part of the Rapoport-Luebering glycolytic bypass. Has a role in embryonic tracheal development where it localizes to the leading edge of actively migrating branches. In these leading cells, enhances formation and/or maintenance of filopodia which may drive branch migration and elongation by cell-cell intercalation. The function in tracheal morphogenesis is dependent on its inositol polyphosphate phosphatase activity. In Drosophila melanogaster (Fruit fly), this protein is Multiple inositol polyphosphate phosphatase 1.